The chain runs to 320 residues: Calnexin-independence factor 1 (320 aa).

The tract at residues S16–E36 is disordered.

The protein resides in the nucleus. Its subcellular location is the nucleolus. Induces a stably inheritable state of calnexin independence called the Cin state when overexpressed. The sequence is that of Calnexin-independence factor 1 (cif1) from Schizosaccharomyces pombe (strain 972 / ATCC 24843) (Fission yeast).